A 422-amino-acid polypeptide reads, in one-letter code: MAASTNSFLIGNQTQIPSLKPKSISQSFIHFTKPNTINLTTRTKSVSIRCASASTTVGSEQRVINFAAGPAALPENVLLKAQSDLYNWRGSGMSVMEMSHRGKEFLSIIQKAESDLRQLLEIPSEYSVLFLQGGATTQFAALPLNLCKSDDSVDYIVTGSWGDKAFKEAKKYCNPKVIWSGKSEKYTKVPTFDGLEQSSDAKYLHICANETIHGVEFKDYPLVENPDGVLIADMSSNFCSKPVDVSKFGVIYAGAQKNVGPSGVTIVIIRKDLIGNARDITPVMLDYKIHDENSSLYNTPPCFGIYMCGLVFDDLLEQGGLKEVEKKNQRKAELLYNAIDESRGFFRCPVEKSVRSLMNVPFTLEKSELEAEFIKEAAKEKMVQLKGHRSVGGMRASIYNAMPLAGVEKLVAFMKDFQARHA.

The transit peptide at 1–50 directs the protein to the chloroplast; the sequence is MAASTNSFLIGNQTQIPSLKPKSISQSFIHFTKPNTINLTTRTKSVSIRC. An N-acetylalanine modification is found at A51. R101 provides a ligand contact to L-glutamate. Pyridoxal 5'-phosphate-binding positions include 135 to 136, W161, T211, D233, and Q256; that span reads AT. Residue K257 is modified to N6-(pyridoxal phosphate)lysine. 298–299 contributes to the pyridoxal 5'-phosphate binding site; sequence NT.

Belongs to the class-V pyridoxal-phosphate-dependent aminotransferase family. SerC subfamily. Requires pyridoxal 5'-phosphate as cofactor.

The protein resides in the plastid. Its subcellular location is the chloroplast. It carries out the reaction O-phospho-L-serine + 2-oxoglutarate = 3-phosphooxypyruvate + L-glutamate. It catalyses the reaction 4-(phosphooxy)-L-threonine + 2-oxoglutarate = (R)-3-hydroxy-2-oxo-4-phosphooxybutanoate + L-glutamate. It functions in the pathway amino-acid biosynthesis; L-serine biosynthesis; L-serine from 3-phospho-D-glycerate: step 2/3. Its function is as follows. Involved in the plastidial phosphorylated pathway of serine biosynthesis (PPSB). Catalyzes the reversible conversion of 3-phosphohydroxypyruvate to phosphoserine. This chain is Phosphoserine aminotransferase 2, chloroplastic (PSAT2), found in Arabidopsis thaliana (Mouse-ear cress).